The sequence spans 90 residues: Small ribosomal subunit protein bS16 (90 aa).

This sequence belongs to the bacterial ribosomal protein bS16 family.

The sequence is that of Small ribosomal subunit protein bS16 from Lactobacillus gasseri (strain ATCC 33323 / DSM 20243 / BCRC 14619 / CIP 102991 / JCM 1131 / KCTC 3163 / NCIMB 11718 / NCTC 13722 / AM63).